A 130-amino-acid chain; its full sequence is Large ribosomal subunit protein bL21 (130 aa).

The disordered stretch occupies residues 110–130 (KTAAQPAADEAVAANEVDSEA). The segment covering 112–130 (AAQPAADEAVAANEVDSEA) has biased composition (low complexity).

It belongs to the bacterial ribosomal protein bL21 family. In terms of assembly, part of the 50S ribosomal subunit. Contacts protein L20.

Its function is as follows. This protein binds to 23S rRNA in the presence of protein L20. This is Large ribosomal subunit protein bL21 from Cyanothece sp. (strain PCC 7425 / ATCC 29141).